The sequence spans 620 residues: Leucine-rich repeat and immunoglobulin-like domain-containing nogo receptor-interacting protein 1 (620 aa).

The first 41 residues, 1–41 (MQVSKRMLAGGVRSMPSPLLACWQPILLLVLGSVLSGSATG), serve as a signal peptide directing secretion. Intrachain disulfides connect Cys-42-Cys-48 and Cys-46-Cys-57. The LRRNT domain occupies 42-71 (CPPRCECSAQDRAVLCHRKRFVAVPEGIPT). At 42 to 561 (CPPRCECSAQ…FDIKTLIIAT (520 aa)) the chain is on the extracellular side. LRR repeat units follow at residues 72 to 93 (ETRL…EFAS), 96 to 117 (HLEE…AFNN), 120 to 141 (NLRT…VFTG), 144 to 165 (NLTK…MFQD), 168 to 189 (NLKS…AFSG), 192 to 213 (SLEQ…ALSH), 216 to 237 (GLIV…SFKR), 264 to 285 (NLTS…AVRH), 288 to 309 (YLRF…MLHE), 312 to 333 (RLQE…AFRG), and 336 to 357 (YLRV…VFHS). The N-linked (GlcNAc...) asparagine glycan is linked to Asn-144. The N-linked (GlcNAc...) asparagine glycan is linked to Asn-202. 3 N-linked (GlcNAc...) asparagine glycosylation sites follow: Asn-264, Asn-274, and Asn-293. A glycan (N-linked (GlcNAc...) asparagine) is linked at Asn-341. The 55-residue stretch at 369–423 (NPLACDCRLLWVFRRRWRLNFNRQQPTCATPEFVQGKEFKDFPDVLLPNYFTCRR) folds into the LRRCT domain. 3 disulfides stabilise this stretch: Cys-373–Cys-396, Cys-375–Cys-421, and Cys-446–Cys-497. In terms of domain architecture, Ig-like C2-type spans 411 to 513 (PDVLLPNYFT…GNDSMPAHLH (103 aa)). Asn-492, Asn-505, Asn-526, and Asn-542 each carry an N-linked (GlcNAc...) asparagine glycan. Residues 562–582 (TMGFISFLGVVLFCLVLLFLW) form a helical membrane-spanning segment. The Cytoplasmic portion of the chain corresponds to 583 to 620 (SRGKGNTKHNIEIEYVPRKSDAGISSADAPRKFNMKMI). Residue Ser-602 is modified to Phosphoserine.

In terms of assembly, homotetramer. Forms a ternary complex with RTN4R/NGFR and RTN4R/TNFRSF19. Interacts with NGRF and MYT1L. Interacts with RTN4R. In terms of processing, N-glycosylated. Contains predominantly high-mannose glycans. As to expression, expressed exclusively in the central nervous system. Highest level in the in amygdala, hippocampus, thalamus and cerebral cortex. In the rest of the brain a basal expression seems to be always present. Up-regulated in substantia nigra neurons from Parkinson disease patients.

It localises to the cell membrane. In terms of biological role, functional component of the Nogo receptor signaling complex (RTN4R/NGFR) in RhoA activation responsible for some inhibition of axonal regeneration by myelin-associated factors. Is also an important negative regulator of oligodentrocyte differentiation and axonal myelination. Acts in conjunction with RTN4 and RTN4R in regulating neuronal precursor cell motility during cortical development. This Homo sapiens (Human) protein is Leucine-rich repeat and immunoglobulin-like domain-containing nogo receptor-interacting protein 1 (LINGO1).